The following is a 434-amino-acid chain: F-box/LRR-repeat protein 21 (434 aa).

The 47-residue stretch at arginine 39–phenylalanine 85 folds into the F-box domain. LRR repeat units follow at residues leucine 140 to histidine 165, aspartate 187 to serine 213, cysteine 214 to tyrosine 239, leucine 242 to valine 265, glycine 322 to alanine 347, glycine 349 to glutamate 374, and cysteine 375 to glutamate 400.

Part of the SCF (SKP1-CUL1-F-box) E3 ubiquitin-protein ligase complex SCF(FBXL21) composed of CUL1, SKP1, RBX1 and FBXL21. Interacts with CRY2. Interacts with CRY1. Expressed in the adenohypophysis, hypothalamus (especially in the suprachiasmatic nucleus or nuclei, SCN) and pineal, all neuroendocrine structures associated with timing and homeostasis.

Its subcellular location is the cytoplasm. It localises to the cytosol. The protein resides in the nucleus. It functions in the pathway protein modification; protein ubiquitination. In terms of biological role, substrate-recognition component of the SCF(FBXL21) E3 ubiquitin ligase complex involved in circadian rhythm function. Plays a key role in the maintenance of both the speed and the robustness of the circadian clock oscillation. The SCF(FBXL21) complex mainly acts in the cytosol and mediates ubiquitination of CRY proteins (CRY1 and CRY2), leading to CRY proteins stabilization. The SCF(FBXL21) complex counteracts the activity of the SCF(FBXL3) complex and protects CRY proteins from degradation. Involved in the hypothalamic suprachiasmatic nucleus (SCN) clock regulating temporal organization of the daily activities. The chain is F-box/LRR-repeat protein 21 (Fbxl21) from Ovis aries (Sheep).